The following is a 273-amino-acid chain: Shikimate dehydrogenase (NADP(+)) (273 aa).

Shikimate-binding positions include 18–20 (SKS) and T65. The active-site Proton acceptor is the K69. E81 serves as a coordination point for NADP(+). 2 residues coordinate shikimate: N90 and D105. NADP(+) contacts are provided by residues 130-134 (GAGGA), 154-159 (NRTHSK), and M217. Position 219 (Y219) interacts with shikimate. Residue G240 participates in NADP(+) binding.

This sequence belongs to the shikimate dehydrogenase family. Homodimer.

It carries out the reaction shikimate + NADP(+) = 3-dehydroshikimate + NADPH + H(+). It functions in the pathway metabolic intermediate biosynthesis; chorismate biosynthesis; chorismate from D-erythrose 4-phosphate and phosphoenolpyruvate: step 4/7. Involved in the biosynthesis of the chorismate, which leads to the biosynthesis of aromatic amino acids. Catalyzes the reversible NADPH linked reduction of 3-dehydroshikimate (DHSA) to yield shikimate (SA). The chain is Shikimate dehydrogenase (NADP(+)) from Janthinobacterium sp. (strain Marseille) (Minibacterium massiliensis).